A 299-amino-acid chain; its full sequence is Protoheme IX farnesyltransferase (299 aa).

Transmembrane regions (helical) follow at residues 25-45, 47-67, 95-115, 119-139, 147-167, 173-193, 218-238, 243-263, and 279-299; these read VVVL…RAGV, WTVL…AAAV, LAAL…LLTF, LAAW…TGFL, IVIG…AVSG, PLLL…ALAI, LHIL…YAIH, LYLL…WALY, and IRYL…PLTL.

It belongs to the UbiA prenyltransferase family. Protoheme IX farnesyltransferase subfamily.

It localises to the cell inner membrane. The enzyme catalyses heme b + (2E,6E)-farnesyl diphosphate + H2O = Fe(II)-heme o + diphosphate. It participates in porphyrin-containing compound metabolism; heme O biosynthesis; heme O from protoheme: step 1/1. Its function is as follows. Converts heme B (protoheme IX) to heme O by substitution of the vinyl group on carbon 2 of heme B porphyrin ring with a hydroxyethyl farnesyl side group. The polypeptide is Protoheme IX farnesyltransferase (Azotobacter vinelandii (strain DJ / ATCC BAA-1303)).